Here is a 1117-residue protein sequence, read N- to C-terminus: Sodium-driven chloride bicarbonate exchanger (1117 aa).

Over residues 1–14 (MQSGTCESFQSLSH) the composition is skewed to polar residues. Disordered regions lie at residues 1 to 26 (MQSGTCESFQSLSHQRNDEEAVVDRG), 57 to 94 (GRKSHRRHRHRGHKHRKRDRERDSGLEDGRESPSFDTP), 244 to 312 (KQSE…PHQQ), and 456 to 475 (NGTAAHGEAEPHGGHSGPEL). The Cytoplasmic segment spans residues 1 to 508 (MQSGTCESFQ…DFTDALSLQC (508 aa)). A compositionally biased stretch (basic and acidic residues) spans 15-26 (QRNDEEAVVDRG). The segment covering 58-75 (RKSHRRHRHRGHKHRKRD) has biased composition (basic residues). Over residues 76–89 (RERDSGLEDGRESP) the composition is skewed to basic and acidic residues. Residue Ser-88 is modified to Phosphoserine. Residue Thr-93 is modified to Phosphothreonine. The span at 247–263 (EPNSMDKNAGQVVSPQS) shows a compositional bias: polar residues. Ser-275 is modified (phosphoserine). The helical transmembrane segment at 509 to 529 (LASFLFLYCACMSPVITFGGL) threads the bilayer. Residues 530–537 (LGEATEGR) are Extracellular-facing. The helical transmembrane segment at 538–558 (ISAIESLFGASMTGIAYSLFG) threads the bilayer. The Cytoplasmic segment spans residues 559 to 561 (GQP). Residues 562–582 (LTILGSTGPVLVFEKILFKFC) traverse the membrane as a helical segment. At 583–595 (KEYGLSYLSLRAS) the chain is on the extracellular side. A helical transmembrane segment spans residues 596–616 (IGLWTATLCIILVATDASSLV). Over 617–625 (CYITRFTEE) the chain is Cytoplasmic. Residues 626-646 (AFASLICIIFIYEALEKLFEL) form a helical membrane-spanning segment. Residues 647-719 (SEAYPINMHN…VGRACGHEHP (73 aa)) are Extracellular-facing. N-linked (GlcNAc...) asparagine glycosylation is found at Asn-673, Asn-676, Asn-686, and Asn-696. Residues 720-740 (YVPDVLFWSVILFFSTVTLSA) traverse the membrane as a helical segment. Residues 741 to 761 (TLKQFKTSRYFPTKVRSIVSD) are Cytoplasmic-facing. The chain crosses the membrane as a helical span at residues 762–782 (FAVFLTILCMVLIDYAIGIPS). Residues 783 to 808 (PKLQVPSVFKPTRDDRGWFVTPLGPN) are Extracellular-facing. A helical membrane pass occupies residues 809 to 829 (PWWTVIAAIIPALLCTILIFM). The Cytoplasmic segment spans residues 830–854 (DQQITAVIINRKEHKLKKGCGYHLD). Residues 855-875 (LLMVAVMLGVCSIMGLPWFVA) form a helical membrane-spanning segment. At 876–911 (ATVLSITHVNSLKLESECSAPGEQPKFLGIREQRVT) the chain is on the extracellular side. The chain crosses the membrane as a helical span at residues 912 to 932 (GLMIFILMGSSVFMTSILKFI). The Cytoplasmic segment spans residues 933 to 934 (PM). The chain crosses the membrane as a helical span at residues 935 to 955 (PVLYGVFLYMGASSLKGIQFF). At 956-997 (DRIKLFWMPAKHQPDFIYLRHVPLRKVHLFTVIQMSCLGLLW) the chain is on the extracellular side. The helical transmembrane segment at 998–1018 (IIKVSRAAIVFPMMVLALVFV) threads the bilayer. Residues 1019-1117 (RKLMDFLFTK…SSFPSKSSPS (99 aa)) are Cytoplasmic-facing. Residues Ser-1056 and Ser-1084 each carry the phosphoserine modification.

It belongs to the anion exchanger (TC 2.A.31) family. N-glycosylated.

Its subcellular location is the basolateral cell membrane. It is found in the apical cell membrane. The protein resides in the cell projection. The protein localises to the dendrite. It localises to the axon. Its subcellular location is the perikaryon. It is found in the presynapse. The protein resides in the postsynapse. Sodium/bicarbonate cotransporter which plays an important role in regulating intracellular pH. Has been shown to act as a sodium/bicarbonate cotransporter in exchange for intracellular chloride. Has also been shown to act as a sodium/biocarbonate cotransporter which does not couple net influx of bicarbonate to net efflux of chloride, with the observed chloride efflux being due to chloride self-exchange. Controls neuronal pH and may contribute to the secretion of cerebrospinal fluid. Acting on presynaptic intracellular pH, it promotes GABA release, reduces the excitability of CA1 pyramidal neurons, and modulates short-term synaptic plasticity. Required in retinal cells to maintain normal pH which is necessary for normal vision. In the kidney, likely to mediate bicarbonate reclamation in the apical membrane of the proximal tubules. The sequence is that of Sodium-driven chloride bicarbonate exchanger from Bos taurus (Bovine).